The chain runs to 264 residues: MRQYLDLLEHVIETGTDRGDRTGTGTRSVFGYQMRFDLSQGFPVLTTKKLHLRSIIHELLWFLKGDTNIAYLKEHGVRIWDEWADENGDLGPVYGYQWRSWPTPDGGHIDQIATLVEGLKTNPNSRRHIVSAWNPALVDDMALPPCHCLFQFYVADGKLSCQLYQRSGDIFLGVPFNIASYALLTMMVAQVTGLEAGDFVHTLGDAHIYRNHFEQAQLQLTRTPKPLPRMEINPAVKDLFSFRFEDFELTGYEADSHIKAPVAV.

Residue R21 coordinates dUMP. H51 lines the (6R)-5,10-methylene-5,6,7,8-tetrahydrofolate pocket. Residue 126–127 (RR) participates in dUMP binding. The Nucleophile role is filled by C146. Residues 166–169 (RSGD), N177, and 207–209 (HIY) contribute to the dUMP site. D169 is a binding site for (6R)-5,10-methylene-5,6,7,8-tetrahydrofolate. A263 contributes to the (6R)-5,10-methylene-5,6,7,8-tetrahydrofolate binding site.

This sequence belongs to the thymidylate synthase family. Bacterial-type ThyA subfamily. In terms of assembly, homodimer.

It localises to the cytoplasm. It carries out the reaction dUMP + (6R)-5,10-methylene-5,6,7,8-tetrahydrofolate = 7,8-dihydrofolate + dTMP. It functions in the pathway pyrimidine metabolism; dTTP biosynthesis. Its function is as follows. Catalyzes the reductive methylation of 2'-deoxyuridine-5'-monophosphate (dUMP) to 2'-deoxythymidine-5'-monophosphate (dTMP) while utilizing 5,10-methylenetetrahydrofolate (mTHF) as the methyl donor and reductant in the reaction, yielding dihydrofolate (DHF) as a by-product. This enzymatic reaction provides an intracellular de novo source of dTMP, an essential precursor for DNA biosynthesis. This is Thymidylate synthase from Sinorhizobium medicae (strain WSM419) (Ensifer medicae).